The sequence spans 341 residues: Major histocompatibility complex class I-related protein 1 (341 aa).

A signal peptide spans M1–T18. The tract at residues R19–S105 is alpha-1. The interval R19–T197 is antigen-binding cleft. The Extracellular portion of the chain corresponds to R19 to R296. The 8-(9H-purin-6-yl)-2-oxa-8-azabicyclo[3.3.1]nona-3,6-diene-4,6-dicarbaldehyde site is built by Y25 and R27. 3 residues coordinate 5-(2-oxoethylideneamino)-6-(D-ribitylamino)uracil: R27, S42, and K61. Positions 27, 42, and 61 each coordinate 5-(2-oxopropylideneamino)-6-(D-ribitylamino)uracil. 7-hydroxy-6-methyl-8-(1-D-ribityl)lumazine contacts are provided by R27, S42, and K61. 2 residues coordinate 8-(9H-purin-6-yl)-2-oxa-8-azabicyclo[3.3.1]nona-3,6-diene-4,6-dicarbaldehyde: K61 and H76. K61 is a 2-amino-4-oxopteridine-6-carbaldehyde binding site. K61 is a pyridoxal binding site. An N-linked (GlcNAc...) asparagine glycan is attached at N103. An alpha-2 region spans residues G106–T197. R112 contacts 8-(9H-purin-6-yl)-2-oxa-8-azabicyclo[3.3.1]nona-3,6-diene-4,6-dicarbaldehyde. 5-(2-oxoethylideneamino)-6-(D-ribitylamino)uracil contacts are provided by R112, Y170, and Q171. R112, Y170, and Q171 together coordinate 5-(2-oxopropylideneamino)-6-(D-ribitylamino)uracil. Positions 112, 170, and 171 each coordinate 7-hydroxy-6-methyl-8-(1-D-ribityl)lumazine. Cystine bridges form between C116–C179 and C218–C274. The alpha-3 stretch occupies residues E198–R289. The Ig-like C1-type domain occupies P200–S301. Residues E290–R296 form a connecting peptide region. Residues V297–I317 traverse the membrane as a helical segment. The Cytoplasmic segment spans residues W318–S341.

Belongs to the MHC class I family. As to quaternary structure, heterotrimer that consists of MR1, B2M and metabolite antigen. Major classes of metabolite ligands presented by MR1 include riboflavin-related antigens, pyrimidines and ribityl lumazines, nucleobase adducts and folate derivatives. Forms reversible covalent Schiff base complexes with microbial pyrimidine-based metabolite, which serves as a molecular switch triggering complete folding, stable association with B2M and translocation of the ternary complex from endoplasmic reticulum to the plasma membrane. Alternatively, forms non-Schiff base complexes with ribityl lumazines. On antigen-presenting cells, the ternary complex interacts with TCR on MR1-restricted CD4- or CD8-positive T cell subsets. Interacts with TAPBP and TAPBPL chaperones in the endoplasmic reticulum. TAPBP associated or not with MHC class I peptide loading complex binds ligand-free MR1 or MR1-B2M complex, providing for stable MR1 pools ready for metabolite antigen processing. TAPBPL interacts with MR1 in a ligand-independent way; this interaction may stabilize MR1 pool and facilitate ligand loading and dissociation. Structurally, MR1-B2M heterodimer adopts a topology similar to classical MHC class I molecules, with alpha-1 and alpha-2 domains of MR1 forming the antigen-binding cleft composed of two alpha-helices resting on a floor of 7-stranded anti-parallel beta-pleated sheet. N-glycosylated. In terms of tissue distribution, highly expressed thymus. Expressed in liver, kidney, spleen, heart, brain, lung, skeletal muscle and testis.

The protein localises to the cell membrane. Its subcellular location is the endoplasmic reticulum membrane. It is found in the golgi apparatus membrane. It localises to the early endosome membrane. The protein resides in the late endosome membrane. Antigen-presenting molecule specialized in displaying microbial pyrimidine-based metabolites to alpha-beta T cell receptors (TCR) on innate-type mucosal-associated invariant T (MAIT) cells. In complex with B2M preferentially presents riboflavin-derived metabolites to semi-invariant TRAV1 TCRs on MAIT cells, guiding immune surveillance of the microbial metabolome at mucosal epithelial barriers. Signature pyrimidine-based microbial antigens are generated via non-enzymatic condensation of metabolite intermediates of the riboflavin pathway with by-products arising from other metabolic pathways such as glycolysis. Typical potent antigenic metabolites are 5-(2-oxoethylideneamino)-6-D-ribitylaminouracil (5-OE-RU) and 5-(2-oxopropylideneamino)-6-D-ribitylaminouracil (5-OP-RU), products of condensation of 5-amino-6-D-ribityaminouracil (5-A-RU) with glyoxal or methylglyoxal by-products, respectively. May present microbial antigens to various TRAV1-negative MAIT cell subsets, providing for unique recognition of diverse microbes, including pathogens that do not synthesize riboflavin. Upon antigen recognition, elicits rapid innate-type MAIT cell activation to eliminate pathogenic microbes by directly killing infected cells. During T cell development, drives thymic selection and post-thymic terminal differentiation of MAIT cells in a process dependent on commensal microflora. Acts as an immune sensor of cancer cell metabolome. May present a tumor-specific or -associated metabolite essential for cancer cell survival to a pan-cancer TCR on a non-MAIT CD8-positive T cell clone, triggering T cell-mediated killing of a wide range of cancer cell types. May present tumor-enriched pyridoxal and pyridoxal 5'-phosphate antigens, enabling preferential recognition of cancer cells. Presents nucleobase carbonyl adducts generated during oxidative stress. Captures M3Ade, a nucleobase adduct composed of one adenine modified by a malondialdehyde trimer, for recognition by MR1-restricted T cell clones expressing a polyclonal TCR repertoire. This Mus musculus (Mouse) protein is Major histocompatibility complex class I-related protein 1.